Here is a 125-residue protein sequence, read N- to C-terminus: MKIGNDSNKEVKIFVKNIHMSAYKLRRVVNQIRGHSYGEAVMILEFMPYRACYPVLKLVSNAAENANHKMGLRKADLFVSEVKVDAGSFAKRLRLRAQGRNYPIHKPTCHITIILKKKSVYKEEL.

It belongs to the universal ribosomal protein uL22 family. Part of the 50S ribosomal subunit.

The protein resides in the plastid. The protein localises to the chloroplast. This protein binds specifically to 23S rRNA. Its function is as follows. The globular domain of the protein is located near the polypeptide exit tunnel on the outside of the subunit, while an extended beta-hairpin is found that lines the wall of the exit tunnel in the center of the 70S ribosome. The chain is Large ribosomal subunit protein uL22c (rpl22) from Huperzia lucidula (Shining clubmoss).